We begin with the raw amino-acid sequence, 211 residues long: Vascular-related unknown protein 1 (211 aa).

A compositionally biased stretch (polar residues) spans methionine 1–glutamine 12. The disordered stretch occupies residues methionine 1–tryptophan 40. Basic and acidic residues predominate over residues asparagine 13–glutamate 37.

As to expression, expressed in vascular tissues of cotyledons, rosette leaves, sepals, petals, anther filaments. Expressed in roots, inflorescence stems and developing seeds.

The protein resides in the cytoplasm. The protein localises to the nucleus. Functionally, involved in the regulation of xylem development and growth. May regulate secondary wall formation during vascular development by modulation of brassinosteroid, gibberellin and auxin hormone signaling pathways. The protein is Vascular-related unknown protein 1 of Arabidopsis thaliana (Mouse-ear cress).